Here is a 145-residue protein sequence, read N- to C-terminus: Large ribosomal subunit protein bL9 (145 aa).

It belongs to the bacterial ribosomal protein bL9 family.

Binds to the 23S rRNA. The protein is Large ribosomal subunit protein bL9 of Ureaplasma urealyticum serovar 10 (strain ATCC 33699 / Western).